A 144-amino-acid chain; its full sequence is 3-dehydroquinate dehydratase (144 aa).

The active-site Proton acceptor is the Tyr-24. Substrate-binding residues include Asn-76, His-82, and Asp-89. Catalysis depends on His-102, which acts as the Proton donor. Substrate is bound by residues 103–104 (LS) and Arg-113.

The protein belongs to the type-II 3-dehydroquinase family. Homododecamer.

It carries out the reaction 3-dehydroquinate = 3-dehydroshikimate + H2O. The protein operates within metabolic intermediate biosynthesis; chorismate biosynthesis; chorismate from D-erythrose 4-phosphate and phosphoenolpyruvate: step 3/7. In terms of biological role, catalyzes a trans-dehydration via an enolate intermediate. This Bordetella petrii (strain ATCC BAA-461 / DSM 12804 / CCUG 43448) protein is 3-dehydroquinate dehydratase.